We begin with the raw amino-acid sequence, 376 residues long: N-acetyldiaminopimelate deacetylase (376 aa).

Residue Asp69 is part of the active site. Glu128 functions as the Proton acceptor in the catalytic mechanism.

This sequence belongs to the peptidase M20A family. N-acetyldiaminopimelate deacetylase subfamily.

It catalyses the reaction N-acetyl-(2S,6S)-2,6-diaminopimelate + H2O = (2S,6S)-2,6-diaminopimelate + acetate. It functions in the pathway amino-acid biosynthesis; L-lysine biosynthesis via DAP pathway; LL-2,6-diaminopimelate from (S)-tetrahydrodipicolinate (acetylase route): step 3/3. Its function is as follows. Catalyzes the conversion of N-acetyl-diaminopimelate to diaminopimelate and acetate. This Streptococcus pneumoniae serotype 4 (strain ATCC BAA-334 / TIGR4) protein is N-acetyldiaminopimelate deacetylase.